Reading from the N-terminus, the 311-residue chain is Ribonuclease HIII (311 aa).

Positions 95 to 311 (MSIVGSDEVG…NTEKAFRLLK (217 aa)) constitute an RNase H type-2 domain. A divalent metal cation contacts are provided by Asp-101, Glu-102, and Asp-206.

The protein belongs to the RNase HII family. RnhC subfamily. Mn(2+) serves as cofactor. Mg(2+) is required as a cofactor.

The protein resides in the cytoplasm. It catalyses the reaction Endonucleolytic cleavage to 5'-phosphomonoester.. Functionally, endonuclease that specifically degrades the RNA of RNA-DNA hybrids. In Bacillus cereus (strain 03BB102), this protein is Ribonuclease HIII.